We begin with the raw amino-acid sequence, 153 residues long: Endoribonuclease YbeY (153 aa).

Residues His116, His120, and His126 each contribute to the Zn(2+) site.

Belongs to the endoribonuclease YbeY family. It depends on Zn(2+) as a cofactor.

Its subcellular location is the cytoplasm. Single strand-specific metallo-endoribonuclease involved in late-stage 70S ribosome quality control and in maturation of the 3' terminus of the 16S rRNA. The protein is Endoribonuclease YbeY of Leifsonia xyli subsp. xyli (strain CTCB07).